The sequence spans 98 residues: MTSRFMTDPHAMRDMAGRFEVHAQTVEDEARRMWASAQNISGAGWSGMAEATSLDTMTQMNQAFRNIVNMLHGVRDGLVRDANNYEQQEQASQQILSS.

This sequence belongs to the WXG100 family. CFP-10 subfamily. Forms a tight 1:1 complex with EsxV. The complex is destabilized at low pH. Unfolding of the proteins is required for dissociation of the complex and membrane binding.

It is found in the secreted. This chain is ESAT-6-like protein EsxW, found in Mycobacterium tuberculosis (strain ATCC 25618 / H37Rv).